A 2703-amino-acid chain; its full sequence is Serine/arginine repetitive matrix protein 2 (2703 aa).

An N-acetylmethionine modification is found at M1. Residues 60 to 92 (HERKRRVELRCLELEEMMEEQGYEEQQIQEKVA) adopt a coiled-coil conformation. K101 is modified (N6-acetyllysine). Residues K108 and K130 each participate in a glycyl lysine isopeptide (Lys-Gly) (interchain with G-Cter in SUMO2) cross-link. Positions 141–1007 (ISDSYVDGSS…SGSFHLCPGV (867 aa)) are disordered. Y145 is subject to Phosphotyrosine. N6-acetyllysine is present on K169. 2 stretches are compositionally biased toward basic residues: residues 186-197 (KQKKKKKKKDRG) and 207-249 (RERK…KRSR). Positions 197 to 259 (GRRSESSSPR…STTPAPKSRR (63 aa)) are sufficient for RNA-binding. 2 positions are modified to phosphoserine: S220 and S222. Residues 263-284 (STSADSASSSDTSRSRSRSAAA) show a composition bias toward low complexity. Phosphoserine occurs at positions 295, 300, 310, 322, and 323. Low complexity predominate over residues 319–334 (QQPSSPAPSTKQSSSP). Over residues 335 to 345 (YEDKDKKEKSA) the composition is skewed to basic and acidic residues. Phosphoserine is present on residues S349, S351, S355, and S356. Phosphothreonine is present on residues T357 and T365. Residues S375, S385, S393, S396, S402, S406, S422, S433, S434, S435, S438, S452, S482, S484, S503, S505, S507, S531, S533, and S540 each carry the phosphoserine modification. Residues 383–396 (PSSQEPVNPSSEAS) show a composition bias toward polar residues. Residues 425–437 (PTKGSRHASSSPE) show a composition bias toward polar residues. A compositionally biased stretch (basic residues) spans 459–533 (NRSHGRAKRD…SPQRRGRSRS (75 aa)). The span at 534–543 (PQRPGWSRSR) shows a compositional bias: low complexity. Basic residues-rich tracts occupy residues 544 to 561 (NTQR…RSHS), 568 to 721 (GRSR…RRGR), and 730 to 740 (NKSRTSQRRSR). Phosphoserine occurs at positions 700, 702, and 704. A phosphoserine mark is found at S773, S775, and S778. Low complexity predominate over residues 785-817 (SQTPTRRSRSGSSPPKQKSKTPPRQSRSNSPQP). Residues S821 and S829 each carry the phosphoserine modification. 2 stretches are compositionally biased toward polar residues: residues 829–851 (SVTN…SESS) and 859–874 (RTPS…PRVK). 2 positions are modified to phosphothreonine: T831 and T841. Residues S846, S850, and S851 each carry the phosphoserine modification. Low complexity-rich tracts occupy residues 875–891 (SSTP…SPQP) and 898–919 (SPRG…TSRT). Phosphoserine is present on residues S882, S909, S924, S926, S928, S940, S942, S944, S945, S946, and S949. The residue at position 955 (T955) is a Phosphothreonine. The span at 960–1000 (SGSTSPYLKSMLQTPPDQNLSGSKSPCPQKSRDSPTGSSGS) shows a compositional bias: polar residues. Phosphoserine is present on residues S962 and S964. Y966 carries the post-translational modification Phosphotyrosine. T973 bears the Phosphothreonine mark. A phosphoserine mark is found at S980, S984, and S993. At T995 the chain carries Phosphothreonine. S997, S1000, S1011, S1037, and S1038 each carry phosphoserine. Positions 1024-1057 (VQQKGHTQTWPDTSSPEVMQTQVESPLLQSKSQT) are enriched in polar residues. The tract at residues 1024–1112 (VQQKGHTQTW…TKPDSSIYPL (89 aa)) is disordered. At T1044 the chain carries Phosphothreonine. Phosphoserine occurs at positions 1048, 1064, 1066, 1067, and 1068. Positions 1058-1068 (SPKGSLSRSSS) are enriched in low complexity. T1071 is modified (phosphothreonine). Residues S1077, S1087, S1094, S1097, S1117, S1151, S1159, S1175, S1188, S1216, S1225, S1229, S1230, S1269, S1276, S1278, S1284, S1287, S1294, S1305, S1325, S1338, S1339, S1340, S1343, S1359, and S1360 each carry the phosphoserine modification. Positions 1079–1092 (VKQDKSEISTDPKL) are enriched in basic and acidic residues. Residues 1136-2092 (IQEDVASSCI…RSPGMLEPLG (957 aa)) form a disordered region. Positions 1146-1158 (PRDKFSPTQDRPE) are enriched in basic and acidic residues. Positions 1270–1284 (PEHKELSHSPPRENS) are enriched in basic and acidic residues. Residues 1285–1304 (FESSLEFKNSGPVSEVNTGF) show a composition bias toward polar residues. Residue T1370 is modified to Phosphothreonine. Over residues 1371–1387 (PSRERSSSASPELKDGL) the composition is skewed to basic and acidic residues. 3 positions are modified to phosphoserine: S1372, S1378, and S1380. T1390 bears the Phosphothreonine mark. Low complexity predominate over residues 1397-1408 (SGSSPGLRDGSG). A phosphoserine mark is found at S1400 and S1407. T1409 is subject to Phosphothreonine. Residues 1409 to 1431 (TPSRHSLSGSSPGMKDTPQTPSR) show a composition bias toward polar residues. A phosphoserine mark is found at S1414, S1416, S1418, and S1419. T1428 carries the post-translational modification Phosphothreonine. S1438 and S1439 each carry phosphoserine. T1448 bears the Phosphothreonine mark. Phosphoserine is present on residues S1453, S1455, S1457, S1458, and S1465. The span at 1454–1468 (HSPSSPERNNKSVTP) shows a compositional bias: polar residues. T1467 is modified (phosphothreonine). S1473, S1475, S1477, and S1478 each carry phosphoserine. Over residues 1475–1489 (SESSVEQKNLARTSP) the composition is skewed to polar residues. T1487 is subject to Phosphothreonine. Low complexity predominate over residues 1490-1499 (GQRSRSGSSQ). Phosphoserine occurs at positions 1493, 1495, 1497, 1498, and 1508. Residues 1511–1523 (ERSESDSSPDSKP) show a composition bias toward basic and acidic residues. Over residues 1524 to 1533 (KTRTPLRQRS) the composition is skewed to basic residues. Phosphoserine occurs at positions 1533, 1535, 1537, 1538, 1554, 1556, 1557, 1572, 1576, 1577, 1604, 1614, 1647, 1649, and 1650. A compositionally biased stretch (low complexity) spans 1604 to 1613 (SPEGSSSSES). The segment covering 1637-1647 (KSHTPPRRRSS) has biased composition (basic residues). T1654 carries the post-translational modification Phosphothreonine. 6 positions are modified to phosphoserine: S1683, S1685, S1687, S1688, S1718, and S1720. Basic residues-rich tracts occupy residues 1725-1745 (GLQR…RRRD) and 1754-1772 (SRRR…RRRG). Phosphoserine occurs at positions 1774, 1778, 1810, 1813, 1832, and 1834. Positions 1776–1789 (YHSRSPTRQESSRT) are enriched in low complexity. Basic residues predominate over residues 1790–1810 (SSRRRRGRSRTPLTSRKRSRS). Residues 1818–2020 (KRSRSRASPA…PRAARGKRSL (203 aa)) show a composition bias toward basic residues. Residue T1836 is modified to Phosphothreonine. A phosphoserine mark is found at S1840 and S1846. T1848 is modified (phosphothreonine). S1849, S1869, S1872, S1876, and S1878 each carry phosphoserine. Phosphothreonine occurs at positions 1880 and 1884. Residues S1898 and S1900 each carry the phosphoserine modification. T1902 and T1906 each carry phosphothreonine. S1910 and S1912 each carry phosphoserine. A phosphothreonine mark is found at T1914 and T1918. 3 positions are modified to phosphoserine: S1922, S1924, and S1927. T1930 bears the Phosphothreonine mark. Phosphoserine occurs at positions 1936, 1939, 1948, 1951, 1960, 1963, 1970, and 1972. A Phosphothreonine modification is found at T1974. 2 positions are modified to phosphoserine: S1982 and S1984. T1986 is modified (phosphothreonine). 4 positions are modified to phosphoserine: S1994, S1996, S1998, and S2019. T2021 is subject to Phosphothreonine. The span at 2022–2047 (RSPPAIRRRSASGSSSDRSRSATPPA) shows a compositional bias: low complexity. Phosphoserine occurs at positions 2023 and 2042. T2044 bears the Phosphothreonine mark. Residues S2052 and S2054 each carry the phosphoserine modification. At T2056 the chain carries Phosphothreonine. The span at 2062-2076 (SSSRMSCFSRPSMSP) shows a compositional bias: low complexity. A phosphoserine mark is found at S2070, S2073, S2075, and S2084. T2096 is subject to Phosphothreonine. Omega-N-methylarginine occurs at positions 2146, 2159, 2183, and 2198. The residue at position 2224 (S2224) is a Phosphoserine. Omega-N-methylarginine occurs at positions 2226 and 2240. 2 positions are modified to phosphothreonine: T2241 and T2254. S2262 carries the post-translational modification Phosphoserine. The tract at residues 2263–2703 (LTGSGTPPTA…SNRHRSSRSP (441 aa)) is disordered. A phosphothreonine mark is found at T2268 and T2281. A compositionally biased stretch (polar residues) spans 2269–2283 (PPTAANYPSSSRTPQ). Omega-N-methylarginine is present on R2295. Residues S2296, S2321, and S2329 each carry the phosphoserine modification. Residue T2334 is modified to Phosphothreonine. S2335 is subject to Phosphoserine. R2337 is modified (asymmetric dimethylarginine; alternate). Position 2337 is an omega-N-methylarginine; alternate (R2337). 3 positions are modified to phosphoserine: S2347, S2351, and S2360. T2362 is subject to Phosphothreonine. Phosphoserine is present on residues S2365, S2368, S2381, S2384, S2404, and S2408. Polar residues-rich tracts occupy residues 2410-2443 (FSDQ…SASD) and 2467-2476 (TGAQQPSTLA). Residues 2487-2521 (SSSSSSSSSSSSSSSSSSSSSSSSGSSSSDSEGSS) show a composition bias toward low complexity. S2535 carries the phosphoserine modification. T2537 is subject to Phosphothreonine. A Glycyl lysine isopeptide (Lys-Gly) (interchain with G-Cter in SUMO2) cross-link involves residue K2541. T2553 is modified (phosphothreonine). A compositionally biased stretch (low complexity) spans 2562 to 2602 (SSSSSSSSSSSSSSSSSSSSSSSSSSSSSSSSSSSSSSSSS). Positions 2605–2622 (PAKPGPQALPKPASPKKP) are enriched in pro residues. 10 positions are modified to phosphoserine: S2618, S2629, S2631, S2638, S2642, S2644, S2646, S2648, S2656, and S2660. The segment covering 2623 to 2643 (PPGERRSRSPRKPIDSLRDSR) has biased composition (basic and acidic residues). A Phosphothreonine modification is found at T2689. A Phosphoserine modification is found at S2691. Residues 2694 to 2703 (SNRHRSSRSP) are compositionally biased toward basic residues.

The protein belongs to the CWC21 family. In terms of assembly, component of pre-catalytic, catalytic and post-catalytic spliceosome complexes. Found in a pre-mRNA splicing complex with SFRS4, SFRS5, SNRP70, SNRPA1, SRRM1 and SRRM2. Component of the minor spliceosome, which splices U12-type introns. Interacts with DHX8. Interacts with CACTIN.

It is found in the nucleus. The protein resides in the nucleus speckle. Functionally, required for pre-mRNA splicing as component of the spliceosome. As a component of the minor spliceosome, involved in the splicing of U12-type introns in pre-mRNAs. This Mus musculus (Mouse) protein is Serine/arginine repetitive matrix protein 2 (Srrm2).